Reading from the N-terminus, the 1084-residue chain is CRISPR-associated endonuclease Cas9 (1084 aa).

The For RuvC-like nuclease domain role is filled by Asp8. Residues Asp8, Glu496, and Glu500 each coordinate Mn(2+). The region spanning 504–665 (TEKRAREMDG…MDEEIDARSM (162 aa)) is the HNH Cas9-type domain. Catalysis depends on His573, which acts as the Proton acceptor for HNH nuclease domain. His727 provides a ligand contact to Mn(2+).

Belongs to the CRISPR-associated protein Cas9 family. Subtype II-C subfamily. In terms of assembly, monomer. Binds crRNA and tracrRNA. Mg(2+) is required as a cofactor.

CRISPR (clustered regularly interspaced short palindromic repeat) is an adaptive immune system that provides protection against mobile genetic elements (viruses, transposable elements and conjugative plasmids). CRISPR clusters contain spacers, sequences complementary to antecedent mobile elements, and target invading nucleic acids. CRISPR clusters are transcribed and processed into CRISPR RNA (crRNA). In type II CRISPR systems correct processing of pre-crRNA requires a trans-encoded small RNA (tracrRNA), endogenous ribonuclease 3 (rnc) and this protein. The tracrRNA serves as a guide for ribonuclease 3-aided processing of pre-crRNA. Subsequently Cas9/crRNA/tracrRNA endonucleolytically cleaves linear or circular dsDNA target complementary to the spacer; Cas9 is inactive in the absence of the 2 guide RNAs (gRNA). Cas9 recognizes the protospacer adjacent motif (PAM) in the CRISPR repeat sequences to help distinguish self versus nonself, as targets within the bacterial CRISPR locus do not have PAMs. PAM recognition is also required for catalytic activity. The protein is CRISPR-associated endonuclease Cas9 of Corynebacterium diphtheriae (strain ATCC 700971 / NCTC 13129 / Biotype gravis).